Consider the following 258-residue polypeptide: Methylthioribulose-1-phosphate dehydratase (258 aa).

The interval Met-1 to Asp-21 is disordered. Cys-105 lines the substrate pocket. 2 residues coordinate Zn(2+): His-123 and His-125. Glu-153 functions as the Proton donor/acceptor in the catalytic mechanism. Residue His-210 coordinates Zn(2+).

It belongs to the aldolase class II family. MtnB subfamily. The cofactor is Zn(2+).

Its subcellular location is the cytoplasm. The catalysed reaction is 5-(methylsulfanyl)-D-ribulose 1-phosphate = 5-methylsulfanyl-2,3-dioxopentyl phosphate + H2O. Its pathway is amino-acid biosynthesis; L-methionine biosynthesis via salvage pathway; L-methionine from S-methyl-5-thio-alpha-D-ribose 1-phosphate: step 2/6. Catalyzes the dehydration of methylthioribulose-1-phosphate (MTRu-1-P) into 2,3-diketo-5-methylthiopentyl-1-phosphate (DK-MTP-1-P). This chain is Methylthioribulose-1-phosphate dehydratase, found in Neurospora crassa (strain ATCC 24698 / 74-OR23-1A / CBS 708.71 / DSM 1257 / FGSC 987).